The chain runs to 246 residues: 2,3-bisphosphoglycerate-dependent phosphoglycerate mutase (246 aa).

Residues 8–15 (RHGQSQWN), 21–22 (TG), Arg-60, 87–90 (EKHY), Lys-98, 114–115 (RR), and 183–184 (GN) each bind substrate. His-9 serves as the catalytic Tele-phosphohistidine intermediate. Glu-87 (proton donor/acceptor) is an active-site residue.

This sequence belongs to the phosphoglycerate mutase family. BPG-dependent PGAM subfamily. As to quaternary structure, homodimer.

It carries out the reaction (2R)-2-phosphoglycerate = (2R)-3-phosphoglycerate. The protein operates within carbohydrate degradation; glycolysis; pyruvate from D-glyceraldehyde 3-phosphate: step 3/5. In terms of biological role, catalyzes the interconversion of 2-phosphoglycerate and 3-phosphoglycerate. The sequence is that of 2,3-bisphosphoglycerate-dependent phosphoglycerate mutase from Dichelobacter nodosus (strain VCS1703A).